The primary structure comprises 429 residues: C4-dicarboxylate transport protein (429 aa).

The next 8 helical transmembrane spans lie at 9 to 29 (VLYV…HYYP), 45 to 65 (LIKM…IAGM), 79 to 99 (LLYF…ATHI), 149 to 169 (GEIL…AHLG), 185 to 205 (VLFG…FGAM), 223 to 243 (LIGT…GTIA), 308 to 328 (IYMT…LTWM), and 356 to 376 (AATL…ILGI).

This sequence belongs to the dicarboxylate/amino acid:cation symporter (DAACS) (TC 2.A.23) family.

It localises to the cell inner membrane. Its function is as follows. Responsible for the transport of dicarboxylates such as succinate, fumarate, and malate from the periplasm across the membrane. The polypeptide is C4-dicarboxylate transport protein (Burkholderia lata (strain ATCC 17760 / DSM 23089 / LMG 22485 / NCIMB 9086 / R18194 / 383)).